A 375-amino-acid chain; its full sequence is Queuine tRNA-ribosyltransferase (375 aa).

Catalysis depends on Asp89, which acts as the Proton acceptor. Residues 89 to 93 (DSGGF), Asp143, Gln187, and Gly214 contribute to the substrate site. Positions 245–251 (GVGKPED) are RNA binding. Asp264 (nucleophile) is an active-site residue. The tract at residues 269–273 (TRNAR) is RNA binding; important for wobble base 34 recognition. Residues Cys302, Cys304, Cys307, and His333 each coordinate Zn(2+).

This sequence belongs to the queuine tRNA-ribosyltransferase family. Homodimer. Within each dimer, one monomer is responsible for RNA recognition and catalysis, while the other monomer binds to the replacement base PreQ1. Zn(2+) serves as cofactor.

It catalyses the reaction 7-aminomethyl-7-carbaguanine + guanosine(34) in tRNA = 7-aminomethyl-7-carbaguanosine(34) in tRNA + guanine. The protein operates within tRNA modification; tRNA-queuosine biosynthesis. Functionally, catalyzes the base-exchange of a guanine (G) residue with the queuine precursor 7-aminomethyl-7-deazaguanine (PreQ1) at position 34 (anticodon wobble position) in tRNAs with GU(N) anticodons (tRNA-Asp, -Asn, -His and -Tyr). Catalysis occurs through a double-displacement mechanism. The nucleophile active site attacks the C1' of nucleotide 34 to detach the guanine base from the RNA, forming a covalent enzyme-RNA intermediate. The proton acceptor active site deprotonates the incoming PreQ1, allowing a nucleophilic attack on the C1' of the ribose to form the product. After dissociation, two additional enzymatic reactions on the tRNA convert PreQ1 to queuine (Q), resulting in the hypermodified nucleoside queuosine (7-(((4,5-cis-dihydroxy-2-cyclopenten-1-yl)amino)methyl)-7-deazaguanosine). This chain is Queuine tRNA-ribosyltransferase, found in Escherichia coli O81 (strain ED1a).